The following is a 278-amino-acid chain: Achaete-scute homolog 5 (278 aa).

The interval 1–66 (MPMGAAERGA…GPFGGGLALG (66 aa)) is disordered. Residues 155 to 207 (AFIQKRNERERQRVKCVNEGYARLRGHLPGALAEKRLSKVETLRAAIRYIKYL) form the bHLH domain. Positions 214-278 (APDGSTPPAS…PFLESEESWH (65 aa)) are disordered. Residues 230-239 (GPCPAPPATP) are compositionally biased toward pro residues. The span at 240 to 249 (RPDRPGDGEA) shows a compositional bias: basic and acidic residues. Residues 252-271 (PSSLVPESSESSCFSPSPFL) are compositionally biased toward low complexity.

As to quaternary structure, interacts with transcription factor TCF3/E12.

The protein resides in the nucleus. In terms of biological role, transcription factor. Probably binds E-box motifs 5'-CANNTG-3' in complex with transcription factor TCF3/E12. Negatively modulates transcription of target genes such as CDH1/E-cadherin, perhaps by recruiting the PRC2 repressive complex to regulatory elements. Regulates ameloblast development and tooth germ growth, perhaps acting by positively modulating migration of inner enamel epithelium (IEE) cells. Plays a role in enamel formation. The polypeptide is Achaete-scute homolog 5 (ASCL5) (Homo sapiens (Human)).